Reading from the N-terminus, the 120-residue chain is Small ribosomal subunit protein uS13 (120 aa).

The segment at 94-120 (GLPLRGQRTRTNARTRKGPRKAIAGKK) is disordered.

The protein belongs to the universal ribosomal protein uS13 family. As to quaternary structure, part of the 30S ribosomal subunit. Forms a loose heterodimer with protein S19. Forms two bridges to the 50S subunit in the 70S ribosome.

In terms of biological role, located at the top of the head of the 30S subunit, it contacts several helices of the 16S rRNA. In the 70S ribosome it contacts the 23S rRNA (bridge B1a) and protein L5 of the 50S subunit (bridge B1b), connecting the 2 subunits; these bridges are implicated in subunit movement. Contacts the tRNAs in the A and P-sites. This chain is Small ribosomal subunit protein uS13, found in Azoarcus sp. (strain BH72).